The following is a 244-amino-acid chain: Na(+)-translocating NADH-quinone reductase subunit E (244 aa).

6 consecutive transmembrane segments (helical) span residues 11–31 (LLGI…TFLG), 47–67 (GLGM…WLIH), 90–110 (FLEL…LELL), 123–143 (GIFL…LFGI), 153–173 (VVFS…FATI), and 189–209 (MGIS…LTGI).

The protein belongs to the NqrDE/RnfAE family. As to quaternary structure, composed of six subunits; NqrA, NqrB, NqrC, NqrD, NqrE and NqrF.

The protein resides in the cell inner membrane. The enzyme catalyses a ubiquinone + n Na(+)(in) + NADH + H(+) = a ubiquinol + n Na(+)(out) + NAD(+). Its function is as follows. NQR complex catalyzes the reduction of ubiquinone-1 to ubiquinol by two successive reactions, coupled with the transport of Na(+) ions from the cytoplasm to the periplasm. NqrA to NqrE are probably involved in the second step, the conversion of ubisemiquinone to ubiquinol. The polypeptide is Na(+)-translocating NADH-quinone reductase subunit E (Chlamydia muridarum (strain MoPn / Nigg)).